A 390-amino-acid chain; its full sequence is Deoxyhypusine synthase-like protein (390 aa).

Belongs to the deoxyhypusine synthase family.

This chain is Deoxyhypusine synthase-like protein, found in Nostoc punctiforme (strain ATCC 29133 / PCC 73102).